The primary structure comprises 122 residues: Cysteine proteinase inhibitor 5 (122 aa).

Residues 1-26 (MTSKVVFLLLLSLVVVLLPLYASAAA) form the signal peptide. A Cystatin domain is found at 29–117 (GGWSPISNVT…RNLTSFEPAN (89 aa)). Residue N36 is glycosylated (N-linked (GlcNAc...) asparagine). The Secondary area of contact signature appears at 72–76 (QVVSG). An N-linked (GlcNAc...) asparagine glycan is attached at N109.

It belongs to the cystatin family. Phytocystatin subfamily.

It is found in the secreted. Specific inhibitor of cysteine proteinases. Probably involved in the regulation of endogenous processes and in defense against pests and pathogens. This is Cysteine proteinase inhibitor 5 (CYS5) from Arabidopsis thaliana (Mouse-ear cress).